Consider the following 846-residue polypeptide: Vinculin (846 aa).

The segment at 1–257 (MPVKFHTKTL…VLQLTTTFEE (257 aa)) is interaction with TLN. Positions 315-370 (RAKLLAAADELDQILKELEELQAKGLGDSRQARALAHAAAVKLQELEQEIRKALAE) form a coiled coil. The interval 617–646 (WVPPRPPLPELEEEEEPPELPPPPEDPASL) is disordered.

Belongs to the vinculin/alpha-catenin family. In terms of assembly, monomer. Interacts with TLN (talin); the interaction facilitates VIN1 binding to F-actin. In terms of tissue distribution, expressed in epithelial tissues, specifically the pinacoderm (outer epithelium) and choanoderm (feeding epithelium) (at protein level). Also detected in migratory cells of the mesohyl (at protein level).

The protein localises to the cytoplasm. It is found in the cell cortex. Its subcellular location is the cell projection. It localises to the filopodium. The protein resides in the cytoskeleton. Its function is as follows. Actin filament (F-actin)-binding protein which may play a role in cell-cell adhesion. In Oscarella pearsei (Sponge), this protein is Vinculin.